We begin with the raw amino-acid sequence, 78 residues long: D-alanyl carrier protein (78 aa).

The Carrier domain occupies 1 to 78 (MNIQETVLNI…QIIQQVEALQ (78 aa)). Residue S36 is modified to O-(pantetheine 4'-phosphoryl)serine.

The protein belongs to the DltC family. In terms of processing, 4'-phosphopantetheine is transferred from CoA to a specific serine of apo-DCP.

It localises to the cytoplasm. It participates in cell wall biogenesis; lipoteichoic acid biosynthesis. Carrier protein involved in the D-alanylation of lipoteichoic acid (LTA). The loading of thioester-linked D-alanine onto DltC is catalyzed by D-alanine--D-alanyl carrier protein ligase DltA. The DltC-carried D-alanyl group is further transferred to cell membrane phosphatidylglycerol (PG) by forming an ester bond, probably catalyzed by DltD. D-alanylation of LTA plays an important role in modulating the properties of the cell wall in Gram-positive bacteria, influencing the net charge of the cell wall. This Enterococcus faecalis (strain ATCC 700802 / V583) protein is D-alanyl carrier protein.